A 589-amino-acid polypeptide reads, in one-letter code: Guanylate-binding protein 1 (589 aa).

The GTPase domain (Globular) stretch occupies residues 1-309 (MASEIHMSEP…SAICSGELPC (309 aa)). One can recognise a GB1/RHD3-type G domain in the interval 35–276 (TQPVVVVAIV…FTSYIFSYSG (242 aa)). GTP-binding positions include 47-53 (YRTGKSY), 67-69 (LGS), and 97-101 (DTEGL). Residue Ser-156 is modified to Phosphoserine. Residue Cys-586 is modified to Cysteine methyl ester. A lipid anchor (S-farnesyl cysteine) is attached at Cys-586. Cys-586 carries S-geranylgeranyl cysteine; partial lipidation. Residue Thr-587 is modified to Phosphothreonine. A propeptide spans 587–589 (TIL) (removed in mature form).

The protein belongs to the TRAFAC class dynamin-like GTPase superfamily. GB1/RHD3 GTPase family. GB1 subfamily. Homodimer; homodimerization occurs upon GTP-binding and is required for the second hydrolysis step from GDP to GMP. Undergoes conformational changes and oligomerization upon GTP-binding and hydrolysis. Heterodimer with other family members, including GBP2, GBP3, GBP4 and GBP5. Dimerization regulates subcellular location to membranous structures. Interacts with SQSTM1. Interacts (when phosphorylated) with 14-3-3 protein sigma (SFN); leading to GBP1 retention in the cytosol and inactivation. In terms of processing, isoprenylation of mouse GBP1 is incomplete. It persistently exists in the cell as a mixture of C20-modified and (more predominantly) unmodified form. Isoprenylation is required for proper subcellular location. Phosphorylated at Ser-156 by PIM1 in absence of infection, inhibits GBP1: phosphorylation promotes interaction with 14-3-3 protein sigma (SFN), leading to GBP1 retention in the cytosol. Dephosphorylated in response to infection, liberating GBP1.

The protein resides in the cytoplasmic vesicle membrane. It localises to the golgi apparatus membrane. It is found in the cell membrane. The protein localises to the cytoplasm. Its subcellular location is the cytosol. The protein resides in the secreted. The enzyme catalyses GTP + H2O = GDP + phosphate + H(+). It catalyses the reaction GDP + H2O = GMP + phosphate + H(+). Functionally, interferon (IFN)-inducible GTPase that plays important roles in innate immunity against a diverse range of bacterial, viral and protozoan pathogens. Hydrolyzes GTP to GMP in two consecutive cleavage reactions: GTP is first hydrolyzed to GDP and then to GMP in a processive manner. Following infection, recruited to the pathogen-containing vacuoles or vacuole-escaped bacteria and promotes both inflammasome assembly and autophagy. Acts as a positive regulator of inflammasome assembly by facilitating the detection of inflammasome ligands from pathogens. Involved in the lysis of pathogen-containing vacuoles, releasing pathogens into the cytosol. Following pathogen release in the cytosol, forms a protein coat in a GTPase-dependent manner that encapsulates pathogens and promotes the detection of ligands by pattern recognition receptors. Plays a key role in inflammasome assembly in response to infection by Gram-negative bacteria: following pathogen release in the cytosol, forms a protein coat that encapsulates Gram-negative bacteria and directly binds to lipopolysaccharide (LPS), disrupting the O-antigen barrier and unmasking lipid A that is that detected by the non-canonical inflammasome effector CASP4/CASP11. Also promotes recruitment of proteins that mediate bacterial cytolysis, leading to release double-stranded DNA (dsDNA) that activates the AIM2 inflammasome. Involved in autophagy by regulating bacteriolytic peptide generation via its interaction with ubiquitin-binding protein SQSTM1, which delivers monoubiquitinated proteins to autolysosomes for the generation of bacteriolytic peptides. Confers protection to several pathogens, including the bacterial pathogens L.monocytogenes and M.bovis BCG as well as the protozoan pathogen T.gondii. Exhibits antiviral activity against influenza virus. The protein is Guanylate-binding protein 1 (Gbp1) of Mus musculus (Mouse).